The sequence spans 92 residues: Large ribosomal subunit protein uL23c (92 aa).

It belongs to the universal ribosomal protein uL23 family. In terms of assembly, part of the 50S ribosomal subunit.

Its subcellular location is the plastid. It localises to the chloroplast. Its function is as follows. Binds to 23S rRNA. The protein is Large ribosomal subunit protein uL23c (rpl23) of Nephroselmis olivacea (Green alga).